A 293-amino-acid chain; its full sequence is MTDSRYIGRFAPSPSGELHFGSLIAALGSYLQARANQGIWRVRIEDIDPPREVPGAADTILRQLDHYGLHWDGDVLWQSQRHEAYREALAWLGEQGLSYYCTCTRARIHAVGGIYDGHCRDLGLGAENAALRLRQTRPVLQFTDRLHGTLIANEPLAREDFIIHRRDGLFAYNLAVVVDDHFQGITEIVRGADLIEPTVRQISLYQHFGWQAPDYLHLPLALNADGNKLSKQNHAPALPEGDPRPEIVRALRFLNQDIAQDWQALSMDDLLSQAVANWQPAKIEHSQMAPAEL.

L-glutamate-binding positions include 9-13 and Glu-45; that span reads RFAPS. Residues 12–22 carry the 'HIGH' region motif; sequence PSPSGELHFGS. Zn(2+) contacts are provided by Cys-101, Cys-103, Tyr-115, and Cys-119. 2 residues coordinate L-glutamate: Tyr-172 and Arg-190. The 'KMSKS' region signature appears at 228–232; sequence KLSKQ. Lys-231 contributes to the ATP binding site.

This sequence belongs to the class-I aminoacyl-tRNA synthetase family. GluQ subfamily. Zn(2+) serves as cofactor.

Catalyzes the tRNA-independent activation of glutamate in presence of ATP and the subsequent transfer of glutamate onto a tRNA(Asp). Glutamate is transferred on the 2-amino-5-(4,5-dihydroxy-2-cyclopenten-1-yl) moiety of the queuosine in the wobble position of the QUC anticodon. The chain is Glutamyl-Q tRNA(Asp) synthetase from Klebsiella pneumoniae (strain 342).